We begin with the raw amino-acid sequence, 432 residues long: Adenylosuccinate synthetase (432 aa).

GTP is bound by residues 12 to 18 (GDEGKGK) and 40 to 42 (GHT). Asp13 functions as the Proton acceptor in the catalytic mechanism. Asp13 and Gly40 together coordinate Mg(2+). IMP is bound by residues 13 to 16 (DEGK), 38 to 41 (NAGH), Thr132, Arg146, Gln226, Thr241, and Arg305. His41 acts as the Proton donor in catalysis. Residue 301–307 (TVTGRKR) coordinates substrate. GTP is bound by residues Arg307, 333 to 335 (KLD), and 415 to 417 (STS).

The protein belongs to the adenylosuccinate synthetase family. In terms of assembly, homodimer. Mg(2+) is required as a cofactor.

It localises to the cytoplasm. It carries out the reaction IMP + L-aspartate + GTP = N(6)-(1,2-dicarboxyethyl)-AMP + GDP + phosphate + 2 H(+). It participates in purine metabolism; AMP biosynthesis via de novo pathway; AMP from IMP: step 1/2. Functionally, plays an important role in the de novo pathway of purine nucleotide biosynthesis. Catalyzes the first committed step in the biosynthesis of AMP from IMP. The sequence is that of Adenylosuccinate synthetase from Sinorhizobium fredii (strain NBRC 101917 / NGR234).